Consider the following 147-residue polypeptide: Siroheme decarboxylase NirG subunit (147 aa).

This sequence belongs to the Ahb/Nir family. In terms of assembly, probably forms a complex composed of NirD, NirL, NirG and NirH. All proteins are required for the total conversion of siroheme to didecarboxysiroheme.

It catalyses the reaction siroheme + 2 H(+) = 12,18-didecarboxysiroheme + 2 CO2. It functions in the pathway porphyrin-containing compound metabolism. In terms of biological role, involved in heme d1 biosynthesis. Catalyzes the decarboxylation of siroheme into didecarboxysiroheme. The polypeptide is Siroheme decarboxylase NirG subunit (Stutzerimonas stutzeri (Pseudomonas stutzeri)).